The primary structure comprises 2524 residues: Highly reducing polyketide synthase Preu5 (2524 aa).

One can recognise a Ketosynthase family 3 (KS3) domain in the interval 5–426 (DTPIAIIGLS…GSNSAIVIEK (422 aa)). Residues Cys175, His310, and His350 each act as for beta-ketoacyl synthase activity in the active site. Residues 431-470 (DELGHETNGTNGVSVSNGVNGSNGFTNGSNGTNGHAENGN) form a disordered region. Residues 437 to 464 (TNGTNGVSVSNGVNGSNGFTNGSNGTNG) show a composition bias toward low complexity. The interval 559 to 882 (VFTGQGAQYA…TYLPSLVRNV (324 aa)) is malonyl-CoA:ACP transacylase (MAT) domain. Catalysis depends on Ser648, which acts as the For malonyltransferase activity. The N-terminal hotdog fold stretch occupies residues 950–1084 (HELLGRRVVS…GQIEPEFADM (135 aa)). In terms of domain architecture, PKS/mFAS DH spans 950-1264 (HELLGRRVVS…FRNIGSADEN (315 aa)). The interval 950–1266 (HELLGRRVVS…NIGSADENID (317 aa)) is dehydratase (DH) domain. Residue His982 is the Proton acceptor; for dehydratase activity of the active site. The C-terminal hotdog fold stretch occupies residues 1102-1264 (ADLLEHDIEG…FRNIGSADEN (163 aa)). Asp1171 acts as the Proton donor; for dehydratase activity in catalysis. Residues 1418 to 1611 (SQAVGDLADN…IPGVWDSEVQ (194 aa)) form a methyltransferase (CMet) domain region. Positions 1825-2139 (GSPDSIYFRR…SGDHLGKIVV (315 aa)) are enoylreductase (ER) domain. A ketoreductase (KR) domain region spans residues 2164-2339 (GTYLVTGGTR…HTVSIALPIV (176 aa)). In terms of domain architecture, Carrier spans 2445–2522 (DPLEGLTEAL…ALATDILSQR (78 aa)). Residue Ser2482 is modified to O-(pantetheine 4'-phosphoryl)serine.

The cofactor is pantetheine 4'-phosphate.

In terms of biological role, highly reducing polyketide synthase; part of a gene cluster that mediates the biosynthesis of a yet unidentified natural product. In Preussia isomera (Coprophilous fungus), this protein is Highly reducing polyketide synthase Preu5.